Reading from the N-terminus, the 66-residue chain is Large ribosomal subunit protein bL33c (66 aa).

This sequence belongs to the bacterial ribosomal protein bL33 family.

It localises to the plastid. The protein localises to the chloroplast. The chain is Large ribosomal subunit protein bL33c from Barbarea verna (Land cress).